A 749-amino-acid chain; its full sequence is Catalase-peroxidase 2 (749 aa).

A signal peptide spans 1-27 (MFKRTIPLFAAFTLAISPSIFPNYAHA). The segment at residues 107–229 (WHAAGTYRIY…LAATVMGLIY (123 aa)) is a cross-link (tryptophyl-tyrosyl-methioninium (Trp-Tyr) (with M-255)). The active-site Proton acceptor is the H108. A cross-link (tryptophyl-tyrosyl-methioninium (Tyr-Met) (with W-107)) is located at residues 229-255 (YVNPEGPNGVPDPLAAAEKIRETFGRM). H270 is a heme b binding site.

This sequence belongs to the peroxidase family. Peroxidase/catalase subfamily. As to quaternary structure, homodimer or homotetramer. Heme b is required as a cofactor. Post-translationally, formation of the three residue Trp-Tyr-Met cross-link is important for the catalase, but not the peroxidase activity of the enzyme.

It catalyses the reaction H2O2 + AH2 = A + 2 H2O. It carries out the reaction 2 H2O2 = O2 + 2 H2O. In terms of biological role, bifunctional enzyme with both catalase and broad-spectrum peroxidase activity. This chain is Catalase-peroxidase 2, found in Legionella pneumophila subsp. pneumophila (strain Philadelphia 1 / ATCC 33152 / DSM 7513).